We begin with the raw amino-acid sequence, 246 residues long: Probable transcriptional regulatory protein CKO_01097 (246 aa).

The segment at 1–20 is disordered; that stretch reads MAGHSKWANTRHRKAAQDAK.

This sequence belongs to the TACO1 family.

Its subcellular location is the cytoplasm. The protein is Probable transcriptional regulatory protein CKO_01097 of Citrobacter koseri (strain ATCC BAA-895 / CDC 4225-83 / SGSC4696).